The sequence spans 352 residues: C-X-C chemokine receptor type 4 (352 aa).

An important for chemokine binding and signaling region spans residues 1 to 21; it reads MEGISIYTSDNYTEEMGSGDY. At 1 to 38 the chain is on the extracellular side; that stretch reads MEGISIYTSDNYTEEMGSGDYDSIKEPCFREENAHFNR. Tyr-7 bears the Sulfotyrosine mark. The N-linked (GlcNAc...) asparagine glycan is linked to Asn-11. Tyr-12 carries the sulfotyrosine modification. Ser-18 is a glycosylation site (O-linked (Xyl...) (chondroitin sulfate) serine). Tyr-21 is subject to Sulfotyrosine. 2 disulfide bridges follow: Cys-28/Cys-274 and Cys-109/Cys-186. Residues 39–63 traverse the membrane as a helical segment; sequence IFLPTIYSIIFLTGIVGNGLVILVM. Residues 64–77 lie on the Cytoplasmic side of the membrane; it reads GYQKKLRSMTDKYR. The chain crosses the membrane as a helical span at residues 78-99; sequence LHLSVADLLFVITLPFWAVDAV. Positions 94-97 are chemokine binding; the sequence is WAVD. Residues 100 to 110 are Extracellular-facing; it reads ANWYFGNFLCK. A helical membrane pass occupies residues 111–130; the sequence is AVHVIYTVNLYSSVLILAFI. Residues 113–117 are chemokine binding; it reads HVIYT. At 131 to 154 the chain is on the cytoplasmic side; it reads SLDRYLAIVHATNSQRPRKLLAEK. The Important for signaling motif lies at 133-135; that stretch reads DRY. An involved in dimerization; when bound to chemokine region spans residues 135–147; that stretch reads YLAIVHATNSQRP. A helical transmembrane segment spans residues 155-174; the sequence is VVYVGVWIPALLLTIPDFIF. Residues 175–195 are Extracellular-facing; sequence ASVSEADDRYICDRFYPNDLW. Positions 186–190 are chemokine binding, important for signaling; it reads CDRFY. The interval 191 to 210 is involved in dimerization; it reads PNDLWVVVFQFQHIMVGLIL. A helical membrane pass occupies residues 196–216; sequence VVVFQFQHIMVGLILPGIVIL. At 217 to 241 the chain is on the cytoplasmic side; sequence SCYCIIISKLSHSKGHQKRKALKTT. Residues 242–261 form a helical membrane-spanning segment; it reads VILILAFFACWLPYYIGISI. Residues 262-282 lie on the Extracellular side of the membrane; it reads DSFILLEIIKQGCEFENTVHK. Positions 266–268 are involved in dimerization; sequence LLE. A helical transmembrane segment spans residues 283-302; the sequence is WISITEALAFFHCCLNPILY. Residues 303-352 are Cytoplasmic-facing; sequence AFLGAKFKTSAQHALTSVSRGSSLKILSKGKRGGHSSVSTESESSSFHSS. Phosphoserine is present on residues Ser-319 and Ser-321. 2 positions are modified to phosphoserine; by PKC and GRK6: Ser-324 and Ser-325. The interval 329–352 is disordered; sequence LSKGKRGGHSSVSTESESSSFHSS. Ser-330 bears the Phosphoserine; by GRK6 mark. Lys-331 is covalently cross-linked (Glycyl lysine isopeptide (Lys-Gly) (interchain with G-Cter in ubiquitin)). Residues 337–352 show a composition bias toward low complexity; that stretch reads HSSVSTESESSSFHSS. The residue at position 339 (Ser-339) is a Phosphoserine; by GRK6. Residues Ser-348 and Ser-351 each carry the phosphoserine modification.

The protein belongs to the G-protein coupled receptor 1 family. As to quaternary structure, monomer. Can form homodimers. Interacts with CD164. Interacts with ARRB2; the interaction is dependent on the C-terminal phosphorylation of CXCR4 and allows activation of MAPK1 and MAPK3. Interacts with ARR3; the interaction is dependent on the C-terminal phosphorylation of CXCR4 and modulates calcium mobilization. Interacts with RNF113A; the interaction, enhanced by CXCL12, promotes CXCR4 ubiquitination and subsequent degradation. Interacts (via the cytoplasmic C-terminal) with ITCH (via the WW domains I and II); the interaction, enhanced by CXCL12, promotes CXCR4 ubiquitination and leads to its degradation. Interacts with extracellular ubiquitin. Interacts with DBN1; this interaction is enhanced by antigenic stimulation. Following LPS binding, may form a complex with GDF5, HSP90AA1 and HSPA8. Post-translationally, phosphorylated on agonist stimulation. Rapidly phosphorylated on serine and threonine residues in the C-terminal. Phosphorylation at Ser-324 and Ser-325 leads to recruitment of ITCH, ubiquitination and protein degradation. Ubiquitinated after ligand binding, leading to its degradation. Ubiquitinated by ITCH at the cell membrane on agonist stimulation. The ubiquitin-dependent mechanism, endosomal sorting complex required for transport (ESCRT), then targets CXCR4 for lysosomal degradation. This process is dependent also on prior Ser-/Thr-phosphorylation in the C-terminal of CXCR4. Also binding of ARRB1 to STAM negatively regulates CXCR4 sorting to lysosomes though modulating ubiquitination of SFR5S. In terms of processing, sulfation is required for efficient binding of CXCL12/SDF-1alpha and promotes its dimerization. Post-translationally, O- and N-glycosylated. N-glycosylation can mask coreceptor function. The O-glycosylation chondroitin sulfate attachment does not affect interaction with CXCL12/SDF-1alpha nor its coreceptor activity.

Its subcellular location is the cell membrane. It localises to the cell junction. The protein localises to the early endosome. The protein resides in the late endosome. It is found in the lysosome. In terms of biological role, receptor for the C-X-C chemokine CXCL12/SDF-1 that transduces a signal by increasing intracellular calcium ion levels and enhancing MAPK1/MAPK3 activation. Involved in the AKT signaling cascade. Plays a role in regulation of cell migration, e.g. during wound healing. Acts as a receptor for extracellular ubiquitin; leading to enhanced intracellular calcium ions and reduced cellular cAMP levels. Binds bacterial lipopolysaccharide (LPS) et mediates LPS-induced inflammatory response, including TNF secretion by monocytes. Involved in hematopoiesis and in cardiac ventricular septum formation. Also plays an essential role in vascularization of the gastrointestinal tract, probably by regulating vascular branching and/or remodeling processes in endothelial cells. Involved in cerebellar development. In the CNS, could mediate hippocampal-neuron survival. In Papio anubis (Olive baboon), this protein is C-X-C chemokine receptor type 4 (CXCR4).